The primary structure comprises 407 residues: Phosphopentomutase (407 aa).

Residues Asp10, Asp306, His311, Asp347, His348, and His359 each coordinate Mn(2+).

This sequence belongs to the phosphopentomutase family. Mn(2+) is required as a cofactor.

Its subcellular location is the cytoplasm. The catalysed reaction is 2-deoxy-alpha-D-ribose 1-phosphate = 2-deoxy-D-ribose 5-phosphate. It catalyses the reaction alpha-D-ribose 1-phosphate = D-ribose 5-phosphate. Its pathway is carbohydrate degradation; 2-deoxy-D-ribose 1-phosphate degradation; D-glyceraldehyde 3-phosphate and acetaldehyde from 2-deoxy-alpha-D-ribose 1-phosphate: step 1/2. Isomerase that catalyzes the conversion of deoxy-ribose 1-phosphate (dRib-1-P) and ribose 1-phosphate (Rib-1-P) to deoxy-ribose 5-phosphate (dRib-5-P) and ribose 5-phosphate (Rib-5-P), respectively. This is Phosphopentomutase from Salmonella arizonae (strain ATCC BAA-731 / CDC346-86 / RSK2980).